The chain runs to 183 residues: UPF0397 protein VSAL_I1988 (183 aa).

Helical transmembrane passes span 8–28 (VVVI…MFGI), 41–61 (AVLA…VGFI), 74–94 (VWLT…LFPI), 110–130 (FFIF…TSAF), and 147–167 (LCII…FILT).

It belongs to the UPF0397 family.

It is found in the cell membrane. The sequence is that of UPF0397 protein VSAL_I1988 from Aliivibrio salmonicida (strain LFI1238) (Vibrio salmonicida (strain LFI1238)).